We begin with the raw amino-acid sequence, 219 residues long: MTQDEMKKAAGWAALEYVTKGSIVGVGTGSTVNHFIDALETRKEEIKGAVSSSVASTERLEKLGIPVFEANEVAGLDIYVDGADEINAEYDMIKGGGAALTREKIVAAISDKFICIVDDTKQVDVLGQFPLPVEVIPMARSFIGRELVKLGGDPEYREGVVTDNGNIIIDVHNMAITDAKDMEKKINALPGVVTVGLFAARGADVLLVGAPEGVRKFEK.

Residues 28-31 (TGST), 81-84 (DGAD), and 94-97 (KGGG) each bind substrate. Glu-103 functions as the Proton acceptor in the catalytic mechanism. Residue Lys-121 coordinates substrate.

It belongs to the ribose 5-phosphate isomerase family. Homodimer.

The enzyme catalyses aldehydo-D-ribose 5-phosphate = D-ribulose 5-phosphate. The protein operates within carbohydrate degradation; pentose phosphate pathway; D-ribose 5-phosphate from D-ribulose 5-phosphate (non-oxidative stage): step 1/1. Its function is as follows. Catalyzes the reversible conversion of ribose-5-phosphate to ribulose 5-phosphate. The protein is Ribose-5-phosphate isomerase A of Photobacterium profundum (strain SS9).